The sequence spans 505 residues: Protein disulfide-isomerase A3 (505 aa).

A signal peptide spans 1 to 24 (MRFSCLALLPGVALLLASALLASA). The Thioredoxin 1 domain maps to 25-133 (SDVLELTDEN…IVSHLKKQAG (109 aa)). Residues C57 and C60 each act as nucleophile in the active site. A disulfide bond links C57 and C60. N6-methyllysine is present on K61. C85 and C92 are joined by a disulfide. An N6-succinyllysine modification is found at K129. K152 is modified (N6-acetyllysine). The residue at position 218 (K218) is an N6-succinyllysine. An N6-acetyllysine modification is found at K252. At T319 the chain carries Phosphothreonine. In terms of domain architecture, Thioredoxin 2 spans 343–485 (SRDGKALERF…FISYLQREAT (143 aa)). K362 carries the N6-acetyllysine modification. Active-site nucleophile residues include C406 and C409. C406 and C409 are oxidised to a cystine. The tract at residues 484–505 (ATNPPIIQEEKPKKKKKAQEDL) is disordered. Positions 491-505 (QEEKPKKKKKAQEDL) are enriched in basic and acidic residues. An N6-acetyllysine modification is found at K494. The Prevents secretion from ER signature appears at 502 to 505 (QEDL).

Belongs to the protein disulfide isomerase family. Part of the major histocompatibility complex class I (MHC I) peptide loading complex composed of TAP1, TAP2, B2M, MHC heavy chain, TAPBP, PDIA3, and CALR. Interacts with ERP27 and CANX. Interacts with SERPINA2 and with SERPINA1. Interacts with ATP2A2. In terms of processing, within the major histocompatibility complex class I (MHC I) peptide loading complex forms reversible disulfide-linked heterodimers with TAPBP as part of its protein folding chaperone activity. This is essential to assist the dynamic assembly of the MHC I complex with high affinity antigens in the endoplasmic reticulum. Post-translationally, phosphorylated. As to expression, in caput epididymal spermatozoa, detected in the head, mid and principal pieces. In cauda epididymal spermatozoa detected only in the acrosome (at protein level).

The protein resides in the endoplasmic reticulum. It is found in the endoplasmic reticulum lumen. Its subcellular location is the melanosome. It carries out the reaction Catalyzes the rearrangement of -S-S- bonds in proteins.. Seems to be inhibited by acidic phospholipids. Protein disulfide isomerase that catalyzes the formation, isomerization, and reduction or oxidation of disulfide bonds in client proteins and functions as a protein folding chaperone. Core component of the major histocompatibility complex class I (MHC I) peptide loading complex where it functions as an essential folding chaperone for TAPBP. Through TAPBP, assists the dynamic assembly of the MHC I complex with high affinity antigens in the endoplasmic reticulum. Therefore, plays a crucial role in the presentation of antigens to cytotoxic T cells in adaptive immunity. The chain is Protein disulfide-isomerase A3 (Pdia3) from Rattus norvegicus (Rat).